Here is a 445-residue protein sequence, read N- to C-terminus: MVQTSTNKINHFESANKVLYEGKDSKNPLAFKYYNPEEVVGGKTMKDQLRFSVAYWHTFTADGTDPFGAATMQRSWDRYDGMDLAKARVEAAFQLFETLNVPFFAFHDRDIAPEGSTLQETNKNLDVIVTMIKEYMQTSNVKLLWNTANMFTNPRFVHGAATSCNADVFAYAAAQVKKGLETAKELGAENYVFWGGREGYETLLNTNLQLELDNLARFMHMAVDYATEIGYTGQFLIEPKPKEPTTHQYDTDAATTISFLRQYGLDKYFKLNLEANHATLAGHTFEHELRVARVQGLLGSVDANQGDPLLGWDTDEFPTDLYSTTLAMYEILQNGGLGSGGLNFDAKVRRGSFEQDDLLYAHVAGMDAFARGLKVAHKLVEDRVFENVINERYSSFKEGIGLEIVEGKANFHTLEQYAFKNPNIANKSGRQERLKSILNQYILEV.

Catalysis depends on residues histidine 107 and aspartate 110. Mg(2+) contacts are provided by glutamate 238, glutamate 274, histidine 277, aspartate 302, aspartate 313, aspartate 315, and aspartate 345.

Belongs to the xylose isomerase family. Homotetramer. Mg(2+) serves as cofactor.

The protein resides in the cytoplasm. The catalysed reaction is alpha-D-xylose = alpha-D-xylulofuranose. The chain is Xylose isomerase (xylA) from Priestia megaterium (strain DSM 319 / IMG 1521) (Bacillus megaterium).